A 313-amino-acid polypeptide reads, in one-letter code: MQHLLSAGDLTRDEALLILDTARELSQVSERSVKKLPTLRGRTVVNLFYEDSTRTRISFEAAAKRMSADVINFSARGSSVSKGESLKDTALTLQAMGADGVVIRHSAPGAARRLADWVDGVVINAGDGTHEHPTQALLDAYTMRERLGRVEGLRVAIVGDIRHSRVARSNVLLLTTLGAEVTLVAPPTLLPVSVDTWPCAVSYDLDEVLPKSDVVMMLRVQAERMHSSFFPSAREYSRRYGLDADRLARMADHAIVMHPGPMVRGMEISAEVADSARSTVTEQVTNGVSVRMAVLYLLLGGAIHRPGNQGEPR.

Arginine 54 and threonine 55 together coordinate carbamoyl phosphate. Residue lysine 82 coordinates L-aspartate. Carbamoyl phosphate contacts are provided by arginine 104, histidine 132, and glutamine 135. L-aspartate is bound by residues arginine 165 and arginine 219. Glycine 260 and proline 261 together coordinate carbamoyl phosphate.

It belongs to the aspartate/ornithine carbamoyltransferase superfamily. ATCase family. Heterododecamer (2C3:3R2) of six catalytic PyrB chains organized as two trimers (C3), and six regulatory PyrI chains organized as three dimers (R2).

The catalysed reaction is carbamoyl phosphate + L-aspartate = N-carbamoyl-L-aspartate + phosphate + H(+). The protein operates within pyrimidine metabolism; UMP biosynthesis via de novo pathway; (S)-dihydroorotate from bicarbonate: step 2/3. Catalyzes the condensation of carbamoyl phosphate and aspartate to form carbamoyl aspartate and inorganic phosphate, the committed step in the de novo pyrimidine nucleotide biosynthesis pathway. The chain is Aspartate carbamoyltransferase catalytic subunit from Thermobifida fusca (strain YX).